Here is a 249-residue protein sequence, read N- to C-terminus: MYILTNILSIISNDVPTPYALGFQDSATPNQEGILELHDNIMFYLLVILGLVSWMLYTITKTYSKNPLPYKYMKHGQFIEIIWTIFPAVVLLIIAFPSFILLYLCDEVISPAMTVKVIGYQWYWKYEYSDFVNSNGETVEFESYIIPDDLLEEGQLRLLDTDTSVVVPVDTHIRFIVTAADVIHDFAIPSLGIKVDANPGRLNQVSALIQREGVFYGMCSELCGTGHSQMPIKIEVVSLGKYLGWLNEQ.

Helical transmembrane passes span 40-60 (NIMF…YTIT) and 81-101 (IIWT…SFIL). Cu cation contacts are provided by H184, C219, E221, C223, H227, and M230. E221 provides a ligand contact to Mg(2+).

This sequence belongs to the cytochrome c oxidase subunit 2 family. As to quaternary structure, component of the cytochrome c oxidase (complex IV, CIV), a multisubunit enzyme composed of a catalytic core of 3 subunits and several supernumerary subunits. The complex exists as a monomer or a dimer and forms supercomplexes (SCs) in the inner mitochondrial membrane with ubiquinol-cytochrome c oxidoreductase (cytochrome b-c1 complex, complex III, CIII). Requires Cu cation as cofactor.

Its subcellular location is the mitochondrion inner membrane. It catalyses the reaction 4 Fe(II)-[cytochrome c] + O2 + 8 H(+)(in) = 4 Fe(III)-[cytochrome c] + 2 H2O + 4 H(+)(out). In terms of biological role, component of the cytochrome c oxidase, the last enzyme in the mitochondrial electron transport chain which drives oxidative phosphorylation. The respiratory chain contains 3 multisubunit complexes succinate dehydrogenase (complex II, CII), ubiquinol-cytochrome c oxidoreductase (cytochrome b-c1 complex, complex III, CIII) and cytochrome c oxidase (complex IV, CIV), that cooperate to transfer electrons derived from NADH and succinate to molecular oxygen, creating an electrochemical gradient over the inner membrane that drives transmembrane transport and the ATP synthase. Cytochrome c oxidase is the component of the respiratory chain that catalyzes the reduction of oxygen to water. Electrons originating from reduced cytochrome c in the intermembrane space (IMS) are transferred via the dinuclear copper A center (CU(A)) of subunit 2 and heme A of subunit 1 to the active site in subunit 1, a binuclear center (BNC) formed by heme A3 and copper B (CU(B)). The BNC reduces molecular oxygen to 2 water molecules using 4 electrons from cytochrome c in the IMS and 4 protons from the mitochondrial matrix. The sequence is that of Cytochrome c oxidase subunit 2 (COX2) from Vanderwaltozyma polyspora (strain ATCC 22028 / DSM 70294 / BCRC 21397 / CBS 2163 / NBRC 10782 / NRRL Y-8283 / UCD 57-17) (Kluyveromyces polysporus).